Consider the following 159-residue polypeptide: Pathogenesis-related leaf protein 6 (159 aa).

Residues 1–24 (MGLFNISLLLTCLMVLAIFHSCEA) form the signal peptide. A Pyrrolidone carboxylic acid modification is found at Gln25. Residues 32-147 (LAVHNDARAQ…NGWWFISCNY (116 aa)) enclose the SCP domain. Intrachain disulfides connect Cys68–Cys136, Cys109–Cys115, and Cys131–Cys145.

It belongs to the CRISP family.

Functionally, probably involved in the defense reaction of plants against pathogens. Has antifungal activity. The protein is Pathogenesis-related leaf protein 6 (PR1B1) of Solanum lycopersicum (Tomato).